The chain runs to 201 residues: dTTP/UTP pyrophosphatase (201 aa).

The active-site Proton acceptor is Asp-75.

The protein belongs to the Maf family. YhdE subfamily. It depends on a divalent metal cation as a cofactor.

It is found in the cytoplasm. It catalyses the reaction dTTP + H2O = dTMP + diphosphate + H(+). The enzyme catalyses UTP + H2O = UMP + diphosphate + H(+). Functionally, nucleoside triphosphate pyrophosphatase that hydrolyzes dTTP and UTP. May have a dual role in cell division arrest and in preventing the incorporation of modified nucleotides into cellular nucleic acids. The polypeptide is dTTP/UTP pyrophosphatase (Pseudomonas fluorescens (strain ATCC BAA-477 / NRRL B-23932 / Pf-5)).